Consider the following 378-residue polypeptide: MFKFHLITKDGKARRGRIYTPHGVIETPVFMPVGTQGTVKAMLHKLLDEIGTQIILGNTYHLYLRPGTEIIKKAGGLHRFISWNKPILTDSGGYQVFSLAKGKFGNRKAKVKVSDEGVEFQDHLQGDKHFFTPEKVVEIQEIFGSDIMMPLDECVEYPVDKNYAEKALKRTINWLERSIKAKKREDQVLFGIVQGAFWKDLRKKAVEETLKFDEFLFGYSIGGLSVGEPKEIMYGMTEVVCELLPEKKPRYLMGVGKPEDILEAVERGVDMFDCVVPTRNARTGTLYTSQGVVDIRHSKWKEDFSPLDPECDCYTCRNFSKAYLRHLFVAEEISAYVLNTIHNLRFYLKMMEEVRKAIEEKRFKELKEKYLQRVKNKL.

The active-site Proton acceptor is the Asp90. Residues 90-94 (DSGGY), Asp152, Gln194, and Gly223 contribute to the substrate site. An RNA binding region spans residues 254–260 (GVGKPED). Asp273 acts as the Nucleophile in catalysis. An RNA binding; important for wobble base 34 recognition region spans residues 278–282 (TRNAR). Residues Cys311, Cys313, Cys316, and His342 each contribute to the Zn(2+) site.

It belongs to the queuine tRNA-ribosyltransferase family. In terms of assembly, homodimer. Within each dimer, one monomer is responsible for RNA recognition and catalysis, while the other monomer binds to the replacement base PreQ1. Zn(2+) serves as cofactor.

The enzyme catalyses 7-aminomethyl-7-carbaguanine + guanosine(34) in tRNA = 7-aminomethyl-7-carbaguanosine(34) in tRNA + guanine. It functions in the pathway tRNA modification; tRNA-queuosine biosynthesis. Catalyzes the base-exchange of a guanine (G) residue with the queuine precursor 7-aminomethyl-7-deazaguanine (PreQ1) at position 34 (anticodon wobble position) in tRNAs with GU(N) anticodons (tRNA-Asp, -Asn, -His and -Tyr). Catalysis occurs through a double-displacement mechanism. The nucleophile active site attacks the C1' of nucleotide 34 to detach the guanine base from the RNA, forming a covalent enzyme-RNA intermediate. The proton acceptor active site deprotonates the incoming PreQ1, allowing a nucleophilic attack on the C1' of the ribose to form the product. After dissociation, two additional enzymatic reactions on the tRNA convert PreQ1 to queuine (Q), resulting in the hypermodified nucleoside queuosine (7-(((4,5-cis-dihydroxy-2-cyclopenten-1-yl)amino)methyl)-7-deazaguanosine). This is Queuine tRNA-ribosyltransferase from Aquifex aeolicus (strain VF5).